The primary structure comprises 189 residues: uncharacterized protein (189 aa).

This is an uncharacterized protein from Saccharomyces cerevisiae (strain ATCC 204508 / S288c) (Baker's yeast).